A 75-amino-acid polypeptide reads, in one-letter code: MLVLTRKKNESIIINDNIEITVVDIQGEQVRIGINAPKSISIYRKEIYLEIQAENKKAAEIKNVDLKEDLKDFLK.

It belongs to the CsrA/RsmA family. Homodimer; the beta-strands of each monomer intercalate to form a hydrophobic core, while the alpha-helices form wings that extend away from the core.

Its subcellular location is the cytoplasm. In terms of biological role, a translational regulator that binds mRNA to regulate translation initiation and/or mRNA stability. Usually binds in the 5'-UTR at or near the Shine-Dalgarno sequence preventing ribosome-binding, thus repressing translation. Its main target seems to be the major flagellin gene, while its function is anatagonized by FliW. The protein is Translational regulator CsrA of Acetivibrio thermocellus (strain ATCC 27405 / DSM 1237 / JCM 9322 / NBRC 103400 / NCIMB 10682 / NRRL B-4536 / VPI 7372) (Clostridium thermocellum).